We begin with the raw amino-acid sequence, 446 residues long: Glucose-6-phosphate isomerase (446 aa).

Glu288 functions as the Proton donor in the catalytic mechanism. Catalysis depends on residues His309 and Lys423.

It belongs to the GPI family.

The protein resides in the cytoplasm. It carries out the reaction alpha-D-glucose 6-phosphate = beta-D-fructose 6-phosphate. It participates in carbohydrate biosynthesis; gluconeogenesis. The protein operates within carbohydrate degradation; glycolysis; D-glyceraldehyde 3-phosphate and glycerone phosphate from D-glucose: step 2/4. Functionally, catalyzes the reversible isomerization of glucose-6-phosphate to fructose-6-phosphate. The chain is Glucose-6-phosphate isomerase from Lacticaseibacillus casei (strain BL23) (Lactobacillus casei).